The following is a 527-amino-acid chain: Arginine--tRNA ligase (527 aa).

The short motif at 108–118 is the 'HIGH' region element; it reads ANPTGPLHIGH.

Belongs to the class-I aminoacyl-tRNA synthetase family. In terms of assembly, monomer.

The protein resides in the cytoplasm. It carries out the reaction tRNA(Arg) + L-arginine + ATP = L-arginyl-tRNA(Arg) + AMP + diphosphate. This Sulfurimonas denitrificans (strain ATCC 33889 / DSM 1251) (Thiomicrospira denitrificans (strain ATCC 33889 / DSM 1251)) protein is Arginine--tRNA ligase.